A 204-amino-acid chain; its full sequence is Thymidylate kinase (204 aa).

An ATP-binding site is contributed by 9–16 (GIEASGKT).

This sequence belongs to the thymidylate kinase family.

The enzyme catalyses dTMP + ATP = dTDP + ADP. Functionally, phosphorylation of dTMP to form dTDP in both de novo and salvage pathways of dTTP synthesis. In Sulfurihydrogenibium sp. (strain YO3AOP1), this protein is Thymidylate kinase.